The primary structure comprises 247 residues: Ubiquinone biosynthesis O-methyltransferase (247 aa).

4 residues coordinate S-adenosyl-L-methionine: Arg39, Gly70, Asp91, and Met134.

It belongs to the methyltransferase superfamily. UbiG/COQ3 family.

The enzyme catalyses a 3-demethylubiquinol + S-adenosyl-L-methionine = a ubiquinol + S-adenosyl-L-homocysteine + H(+). It carries out the reaction a 3-(all-trans-polyprenyl)benzene-1,2-diol + S-adenosyl-L-methionine = a 2-methoxy-6-(all-trans-polyprenyl)phenol + S-adenosyl-L-homocysteine + H(+). It functions in the pathway cofactor biosynthesis; ubiquinone biosynthesis. Its function is as follows. O-methyltransferase that catalyzes the 2 O-methylation steps in the ubiquinone biosynthetic pathway. This chain is Ubiquinone biosynthesis O-methyltransferase, found in Cereibacter sphaeroides (strain ATCC 17029 / ATH 2.4.9) (Rhodobacter sphaeroides).